Here is a 348-residue protein sequence, read N- to C-terminus: Bombesin receptor-activated protein C6orf89 homolog (348 aa).

The Cytoplasmic segment spans residues 1-58 (MDLAANEISIYDKLSETVDLVRQTGHQCGMSEKAIEKFIRQLLEKNEPQRGPPQYPLL). A helical membrane pass occupies residues 59-79 (IAVYKVLLTLGLILFTAYFVI). Over 80–348 (QPFSSLAPEP…ICDGTTLSDL (269 aa)) the chain is Extracellular.

Homodimer. Interacts with BRS3. Interacts (via N-terminus) with SIN3B. Post-translationally, glycosylated.

The protein localises to the golgi apparatus membrane. It is found in the cytoplasm. In terms of biological role, exhibits histone deacetylase (HDAC) enhancer properties. May play a role in cell cycle progression and wound repair of bronchial epithelial cells. The protein is Bombesin receptor-activated protein C6orf89 homolog of Mus musculus (Mouse).